The chain runs to 142 residues: Large ribosomal subunit protein uL13 (142 aa).

It belongs to the universal ribosomal protein uL13 family. Part of the 50S ribosomal subunit.

Functionally, this protein is one of the early assembly proteins of the 50S ribosomal subunit, although it is not seen to bind rRNA by itself. It is important during the early stages of 50S assembly. This Geobacter sp. (strain M21) protein is Large ribosomal subunit protein uL13.